Consider the following 310-residue polypeptide: tRNA dimethylallyltransferase (310 aa).

11-18 lines the ATP pocket; sequence GPTGVGKT. Residue 13 to 18 coordinates substrate; the sequence is TGVGKT.

Belongs to the IPP transferase family. In terms of assembly, monomer. It depends on Mg(2+) as a cofactor.

The enzyme catalyses adenosine(37) in tRNA + dimethylallyl diphosphate = N(6)-dimethylallyladenosine(37) in tRNA + diphosphate. Catalyzes the transfer of a dimethylallyl group onto the adenine at position 37 in tRNAs that read codons beginning with uridine, leading to the formation of N6-(dimethylallyl)adenosine (i(6)A). In Latilactobacillus sakei subsp. sakei (strain 23K) (Lactobacillus sakei subsp. sakei), this protein is tRNA dimethylallyltransferase.